Reading from the N-terminus, the 250-residue chain is Cell division protein ZapD (250 aa).

This sequence belongs to the ZapD family. As to quaternary structure, interacts with FtsZ.

The protein localises to the cytoplasm. Functionally, cell division factor that enhances FtsZ-ring assembly. Directly interacts with FtsZ and promotes bundling of FtsZ protofilaments, with a reduction in FtsZ GTPase activity. This is Cell division protein ZapD from Serratia proteamaculans (strain 568).